Consider the following 256-residue polypeptide: Chalcone--flavanone isomerase (256 aa).

Residues Thr-51, Asn-116, and Ser-193 each coordinate substrate. A disordered region spans residues 219–256 (NSTTDLNESENEKLNSNEVSKEEKPLQVEKSAFKEVEV). A compositionally biased stretch (basic and acidic residues) spans 228–256 (ENEKLNSNEVSKEEKPLQVEKSAFKEVEV).

Belongs to the chalcone isomerase family. As to expression, nodules.

It catalyses the reaction a chalcone = a flavanone.. The protein operates within secondary metabolite biosynthesis; flavonoid biosynthesis. Its function is as follows. Catalyzes the intramolecular cyclization of bicyclic chalcones into tricyclic (S)-flavanones. Responsible for the isomerization of 4,2',4',6'-tetrahydroxychalcone (also termed chalcone) into naringenin. This chain is Chalcone--flavanone isomerase (CHI), found in Elaeagnus umbellata (Autumn olive).